The primary structure comprises 62 residues: Defensin BmKDfsin3 (62 aa).

The signal sequence occupies residues 1 to 24; sequence MKTIVILFVLALVFCTLEMGMVEA. Intrachain disulfides connect cysteine 28–cysteine 49, cysteine 35–cysteine 57, and cysteine 39–cysteine 59.

This sequence belongs to the invertebrate defensin family. Type 2 subfamily. Low expression in both venom and non-venom glands (hemolymph).

The protein resides in the secreted. In terms of biological role, antibacterial peptide active against Gram-positive bacteria (including S.aureus ATCC25923 (MIC=2.5 uM), M.luteus AB93113 (MIC=2.5 uM), and the antibiotic-resistant S.epidermidis PRSE P1389 (MIC=1.25 uM)), but not against Gram-negative bacteria (including E.coli and P.aeruginosa). Also blocks the currents of Kv1.1/KCNA1 (57% inhibition), Kv1.2/KCNA2 (27.5% inhibition), Kv1.3/KCNA3 (IC(50)=23.4 nM, 84.3% inhibition), KCa3.1/KCNN4/IK (15% inhibition), KCa2.3/KCNN3/SK3 (87.5% inhibition) and Kv11.1/KCNH2/ERG1 (30.4% inhibition) channels (tested at 1 uM). It inhibits potassium channel current by interacting with the pore region. The sequence is that of Defensin BmKDfsin3 from Olivierus martensii (Manchurian scorpion).